A 147-amino-acid polypeptide reads, in one-letter code: Large ribosomal subunit protein uL15 (147 aa).

The segment covering 1–13 has biased composition (basic and acidic residues); that stretch reads MRLHDLKPAEGAR. The disordered stretch occupies residues 1 to 58; it reads MRLHDLKPAEGARRERKRVGRGIGSGHGKTSGRGQKGQKARSGGGVRPGFEGGQMPLT. Gly residues-rich tracts occupy residues 21-35 and 42-52; these read RGIG…GRGQ and SGGGVRPGFEG.

The protein belongs to the universal ribosomal protein uL15 family. As to quaternary structure, part of the 50S ribosomal subunit.

Its function is as follows. Binds to the 23S rRNA. The chain is Large ribosomal subunit protein uL15 from Thermoanaerobacter sp. (strain X514).